We begin with the raw amino-acid sequence, 161 residues long: MKAGEPGLALAVQYAVAEPRLPRWRLRRWAGYALAGAAADGLIDFQAAELNVRLVGQAEGRRLNADFRGRDYATNVLTFEYGVDPLGTARGDIVICAPVLAREAREQKKSFVDHATHLTIHGVLHALGYDHIKVREAKRMEALETRILARMGIADPYLLAD.

The Zn(2+) site is built by His121, His125, and His131.

This sequence belongs to the endoribonuclease YbeY family. Zn(2+) serves as cofactor.

It localises to the cytoplasm. In terms of biological role, single strand-specific metallo-endoribonuclease involved in late-stage 70S ribosome quality control and in maturation of the 3' terminus of the 16S rRNA. This chain is Endoribonuclease YbeY, found in Bordetella avium (strain 197N).